A 419-amino-acid chain; its full sequence is Putative competence-damage inducible protein (419 aa).

Belongs to the CinA family.

The sequence is that of Putative competence-damage inducible protein from Lysinibacillus sphaericus (strain C3-41).